A 526-amino-acid polypeptide reads, in one-letter code: Histone-lysine N-methyltransferase SET5 (526 aa).

An SET domain is found at 112–403; that stretch reads AKVEVKFIDD…KGEQIRITYV (292 aa). A disordered region spans residues 450–492; the sequence is NLGVEKIDSNDNSEDGSKKSTGNRKSSMREAQPDLKEILKNGK. Residues 476–492 show a composition bias toward basic and acidic residues; it reads SMREAQPDLKEILKNGK. The residue at position 517 (serine 517) is a Phosphoserine.

The protein belongs to the class V-like SAM-binding methyltransferase superfamily. Histone-lysine methyltransferase family. SET5 subfamily.

The protein localises to the nucleus. The protein resides in the chromosome. It is found in the cytoplasm. The enzyme catalyses L-lysyl-[histone] + S-adenosyl-L-methionine = N(6)-methyl-L-lysyl-[histone] + S-adenosyl-L-homocysteine + H(+). Histone methyltransferase that monomethylates 'Lys-5', 'Lys-8' and 'Lys-12' of histone H4 (H4K5me1, H4K8me1 and H4K12me1, respectively), thereby controlling gene expression and remodeling chromatin structures. This chain is Histone-lysine N-methyltransferase SET5 (SET5), found in Saccharomyces cerevisiae (strain YJM789) (Baker's yeast).